Here is a 367-residue protein sequence, read N- to C-terminus: MSGSSFLFLKSIKCILSSSCHGQNTISNTQLAAQYISKPQKQLCETVLKYFDRQYSEELGEQWWNARDVLLNPLSWQYGVLLNRFSDLTNLKQCLAELGYTNLLQQTHPESHSQTADIPLQCFIHPDPVRIPTQSHHTGWLKQYYLLNAASLLPVLALNVQEGENVLDLCAAPGGKSLAILQTATPGLLHCNEVDQHRHDWLLKTLESYVPPSLRHLLSVTLQDGRSIGTMQPGAYDKVLVDAPCSNDRSWLYTPDTHRGEMWLKERTQLPLLQKELLCSALAAVRPGGIVVYSTCTMSRAENQSVVEEVLASYPGVELQELEQQFIDSLSDHFCFAHLHPSVGQLVIPQKGKTWGPMYVSQLKKIY.

S-adenosyl-L-methionine contacts are provided by residues 170–176, E193, D224, and D242; that span reads CAAPGGK. The active-site Nucleophile is the C296.

Belongs to the class I-like SAM-binding methyltransferase superfamily. RsmB/NOP family.

It localises to the mitochondrion matrix. The catalysed reaction is cytidine(34) in mitochondrial tRNA + S-adenosyl-L-methionine = 5-methylcytidine(34) in mitochondrial tRNA + S-adenosyl-L-homocysteine + H(+). Functionally, mitochondrial tRNA methyltransferase that mediates methylation of cytosine to 5-methylcytosine (m5C) at position 34 of mt-tRNA(Met). mt-tRNA(Met) methylation at cytosine(34) takes place at the wobble position of the anticodon and initiates the formation of 5-formylcytosine (f(5)c) at this position. mt-tRNA(Met) containing the f(5)c modification at the wobble position enables recognition of the AUA codon in addition to the AUG codon, expanding codon recognition in mitochondrial translation. This is tRNA (cytosine(34)-C(5))-methyltransferase, mitochondrial from Danio rerio (Zebrafish).